The primary structure comprises 178 residues: Large ribosomal subunit protein uL6 (178 aa).

This sequence belongs to the universal ribosomal protein uL6 family. Part of the 50S ribosomal subunit.

This protein binds to the 23S rRNA, and is important in its secondary structure. It is located near the subunit interface in the base of the L7/L12 stalk, and near the tRNA binding site of the peptidyltransferase center. This is Large ribosomal subunit protein uL6 from Exiguobacterium sibiricum (strain DSM 17290 / CCUG 55495 / CIP 109462 / JCM 13490 / 255-15).